Consider the following 197-residue polypeptide: FMN-dependent NADH:quinone oxidoreductase (197 aa).

FMN contacts are provided by residues Ser10, 16–18, 93–96, and 137–140; these read SQS, MYNF, and TRGG.

This sequence belongs to the azoreductase type 1 family. Homodimer. The cofactor is FMN.

It carries out the reaction 2 a quinone + NADH + H(+) = 2 a 1,4-benzosemiquinone + NAD(+). It catalyses the reaction N,N-dimethyl-1,4-phenylenediamine + anthranilate + 2 NAD(+) = 2-(4-dimethylaminophenyl)diazenylbenzoate + 2 NADH + 2 H(+). In terms of biological role, quinone reductase that provides resistance to thiol-specific stress caused by electrophilic quinones. Its function is as follows. Also exhibits azoreductase activity. Catalyzes the reductive cleavage of the azo bond in aromatic azo compounds to the corresponding amines. The chain is FMN-dependent NADH:quinone oxidoreductase from Shewanella frigidimarina (strain NCIMB 400).